Here is a 485-residue protein sequence, read N- to C-terminus: NADH-quinone oxidoreductase subunit N (485 aa).

14 consecutive transmembrane segments (helical) span residues 8–28 (LIAL…MLSI), 35–55 (FLNA…LWFV), 71–91 (GFAM…CTFA), 105–125 (FYLL…ANHL), 127–147 (SLFL…GYAF), 159–179 (YTIL…LVYA), 203–223 (LLAG…LVPF), 235–255 (PAPV…GVVM), 271–291 (VVLA…ALSQ), 297–317 (LLGY…IALQ), 326–346 (VGVY…VVSL), 373–393 (AAVM…LGFI), 408–430 (WWLV…RVAV), and 455–475 (IVVL…QPLI).

The protein belongs to the complex I subunit 2 family. NDH-1 is composed of 13 different subunits. Subunits NuoA, H, J, K, L, M, N constitute the membrane sector of the complex.

Its subcellular location is the cell inner membrane. It catalyses the reaction a quinone + NADH + 5 H(+)(in) = a quinol + NAD(+) + 4 H(+)(out). In terms of biological role, NDH-1 shuttles electrons from NADH, via FMN and iron-sulfur (Fe-S) centers, to quinones in the respiratory chain. The immediate electron acceptor for the enzyme in this species is believed to be ubiquinone. Couples the redox reaction to proton translocation (for every two electrons transferred, four hydrogen ions are translocated across the cytoplasmic membrane), and thus conserves the redox energy in a proton gradient. In Shigella sonnei (strain Ss046), this protein is NADH-quinone oxidoreductase subunit N.